Consider the following 507-residue polypeptide: ATP synthase subunit alpha, chloroplastic (507 aa).

Residue 170–177 participates in ATP binding; sequence GDRQTGKT.

The protein belongs to the ATPase alpha/beta chains family. F-type ATPases have 2 components, CF(1) - the catalytic core - and CF(0) - the membrane proton channel. CF(1) has five subunits: alpha(3), beta(3), gamma(1), delta(1), epsilon(1). CF(0) has four main subunits: a, b, b' and c.

It is found in the plastid. Its subcellular location is the chloroplast thylakoid membrane. It carries out the reaction ATP + H2O + 4 H(+)(in) = ADP + phosphate + 5 H(+)(out). Its function is as follows. Produces ATP from ADP in the presence of a proton gradient across the membrane. The alpha chain is a regulatory subunit. The polypeptide is ATP synthase subunit alpha, chloroplastic (Ipomoea purpurea (Common morning glory)).